Reading from the N-terminus, the 233-residue chain is Putative T-box protein 41 (233 aa).

Positions 1–146 (MTVTRNGCRI…MNPHARHFLK (146 aa)) form a DNA-binding region, T-box.

The protein localises to the nucleus. This Caenorhabditis elegans protein is Putative T-box protein 41 (tbx-41).